We begin with the raw amino-acid sequence, 151 residues long: Cell division protein SepF (151 aa).

The protein belongs to the SepF family. Homodimer. Interacts with FtsZ.

The protein resides in the cytoplasm. In terms of biological role, cell division protein that is part of the divisome complex and is recruited early to the Z-ring. Probably stimulates Z-ring formation, perhaps through the cross-linking of FtsZ protofilaments. Its function overlaps with FtsA. The chain is Cell division protein SepF from Desulfitobacterium hafniense (strain Y51).